The chain runs to 469 residues: Argininosuccinate lyase (469 aa).

Belongs to the lyase 1 family. Argininosuccinate lyase subfamily.

It is found in the cytoplasm. It catalyses the reaction 2-(N(omega)-L-arginino)succinate = fumarate + L-arginine. It participates in amino-acid biosynthesis; L-arginine biosynthesis; L-arginine from L-ornithine and carbamoyl phosphate: step 3/3. The chain is Argininosuccinate lyase from Paracoccus denitrificans (strain Pd 1222).